The primary structure comprises 389 residues: RHOMBOID-like protein 1 (389 aa).

The next 7 helical transmembrane spans lie at 56–76 (PWLV…SMFI), 136–156 (IWLH…IFIG), 163–183 (FGFV…SLLS), 191–211 (ISVG…SELL), 221–241 (FAAL…GILP), 244–264 (DNFA…VFLI), and 295–315 (VLWI…LVVL). Residue Ser196 is the Nucleophile of the active site. His248 acts as the Charge relay system in catalysis.

Belongs to the peptidase S54 family. In terms of tissue distribution, expressed in roots, seedlings, leaves, stems and flowers.

Its subcellular location is the golgi apparatus membrane. The enzyme catalyses Cleaves type-1 transmembrane domains using a catalytic dyad composed of serine and histidine that are contributed by different transmembrane domains.. Its function is as follows. Probable rhomboid-type serine protease that catalyzes intramembrane proteolysis. Unable to cleave the Drosophila protein Spitz. The chain is RHOMBOID-like protein 1 from Arabidopsis thaliana (Mouse-ear cress).